The sequence spans 691 residues: Elongation factor G (691 aa).

The tr-type G domain maps to 8–282; it reads ERVRNIGIAA…AVVDYLPAPI (275 aa). GTP is bound by residues 17-24, 81-85, and 135-138; these read AHIDAGKT, DTPGH, and NKMD.

It belongs to the TRAFAC class translation factor GTPase superfamily. Classic translation factor GTPase family. EF-G/EF-2 subfamily.

It localises to the cytoplasm. Functionally, catalyzes the GTP-dependent ribosomal translocation step during translation elongation. During this step, the ribosome changes from the pre-translocational (PRE) to the post-translocational (POST) state as the newly formed A-site-bound peptidyl-tRNA and P-site-bound deacylated tRNA move to the P and E sites, respectively. Catalyzes the coordinated movement of the two tRNA molecules, the mRNA and conformational changes in the ribosome. This chain is Elongation factor G, found in Thermosynechococcus vestitus (strain NIES-2133 / IAM M-273 / BP-1).